The following is a 187-amino-acid chain: NADPH-dependent 3-demethoxyubiquinone 3-hydroxylase, mitochondrial (187 aa).

A mitochondrion-targeting transit peptide spans 1 to 8 (MFRVITRG). Lys-21 contacts NADH. 2 repeat units span residues 28–99 (AGEL…SALL) and 100–187 (GKEG…AEKI). The interval 28–187 (AGELGADRIY…KGAIAIAEKI (160 aa)) is 2 X approximate tandem repeats. Positions 30, 60, 63, 112, 148, and 151 each coordinate Fe cation. Lys-186 lines the NADH pocket.

This sequence belongs to the COQ7 family. In terms of assembly, component of a multi-subunit COQ enzyme complex. It depends on Fe cation as a cofactor.

It localises to the mitochondrion inner membrane. Its subcellular location is the mitochondrion. It is found in the nucleus. It catalyses the reaction a 5-methoxy-2-methyl-3-(all-trans-polyprenyl)benzoquinone + NADH + O2 = a 3-demethylubiquinone + NAD(+) + H2O. The protein operates within cofactor biosynthesis; ubiquinone biosynthesis. Functionally, catalyzes the hydroxylation of the 5-methoxy-2-methyl-3-(all-trans-polyprenyl)benzoquinone at the C6 position and participates in the biosynthesis of ubiquinone. Catalyzes the reaction through a substrate-mediated reduction pathway, whereby NADH shuttles electrons to 5-methoxy-2-methyl-3-(all-trans-decaprenyl)benzoquinone, which then transfers the electrons to the two Fe(3+) centers. The binding of 5-methoxy-2-methyl-3-(all-trans-polyprenyl)benzoquinone (DMQn) mediates reduction of the diiron center by nicotinamide adenine dinucleotide (NADH) and initiates oxygen activation for subsequent DMQ hydroxylation. Also has a structural role in the COQ enzyme complex, stabilizing other COQ polypeptides. Involved in lifespan determination in a ubiquinone-independent manner. Plays a role in modulating mitochondrial stress responses, acting in the nucleus, perhaps via regulating gene expression, independent of its characterized mitochondrial function in ubiquinone biosynthesis. Plays a role in modulating polyribosome formation. The sequence is that of NADPH-dependent 3-demethoxyubiquinone 3-hydroxylase, mitochondrial from Caenorhabditis elegans.